A 315-amino-acid chain; its full sequence is Homoserine kinase (315 aa).

96-106 contributes to the ATP binding site; the sequence is PHSRGLGSSAA.

Belongs to the GHMP kinase family. Homoserine kinase subfamily.

It localises to the cytoplasm. It catalyses the reaction L-homoserine + ATP = O-phospho-L-homoserine + ADP + H(+). It functions in the pathway amino-acid biosynthesis; L-threonine biosynthesis; L-threonine from L-aspartate: step 4/5. Functionally, catalyzes the ATP-dependent phosphorylation of L-homoserine to L-homoserine phosphate. In Mycolicibacterium paratuberculosis (strain ATCC BAA-968 / K-10) (Mycobacterium paratuberculosis), this protein is Homoserine kinase.